The sequence spans 97 residues: Protein YcgL (97 aa).

The region spanning methionine 1 to leucine 85 is the YcgL domain.

This is Protein YcgL from Escherichia fergusonii (strain ATCC 35469 / DSM 13698 / CCUG 18766 / IAM 14443 / JCM 21226 / LMG 7866 / NBRC 102419 / NCTC 12128 / CDC 0568-73).